The chain runs to 341 residues: Anthranilate phosphoribosyltransferase (341 aa).

5-phospho-alpha-D-ribose 1-diphosphate is bound by residues glycine 80, 83–84, threonine 88, 90–93, 108–116, and serine 120; these read GD, NIST, and KHGNRSVSS. Glycine 80 provides a ligand contact to anthranilate. Serine 92 is a binding site for Mg(2+). Asparagine 111 is an anthranilate binding site. An anthranilate-binding site is contributed by arginine 166. Positions 225 and 226 each coordinate Mg(2+).

The protein belongs to the anthranilate phosphoribosyltransferase family. Homodimer. Mg(2+) is required as a cofactor.

It carries out the reaction N-(5-phospho-beta-D-ribosyl)anthranilate + diphosphate = 5-phospho-alpha-D-ribose 1-diphosphate + anthranilate. Its pathway is amino-acid biosynthesis; L-tryptophan biosynthesis; L-tryptophan from chorismate: step 2/5. Functionally, catalyzes the transfer of the phosphoribosyl group of 5-phosphorylribose-1-pyrophosphate (PRPP) to anthranilate to yield N-(5'-phosphoribosyl)-anthranilate (PRA). The protein is Anthranilate phosphoribosyltransferase of Shouchella clausii (strain KSM-K16) (Alkalihalobacillus clausii).